We begin with the raw amino-acid sequence, 464 residues long: Probable mannosyltransferase KTR4 (464 aa).

At 1-11 (MRFLSKRILKP) the chain is on the cytoplasmic side. The helical; Signal-anchor for type II membrane protein transmembrane segment at 12–32 (VLSVIILISIAVTVVLYFLTA) threads the bilayer. The stem region stretch occupies residues 33-130 (NENYLQAVKD…NLVRSGDPLA (98 aa)). The Lumenal segment spans residues 33-464 (NENYLQAVKD…SMSEEELEMY (432 aa)). The catalytic stretch occupies residues 131-464 (GKAKGTILSL…SMSEEELEMY (334 aa)). Glu-352 serves as the catalytic Nucleophile.

It belongs to the glycosyltransferase 15 family.

It localises to the membrane. In terms of biological role, possible glycosyltransferase that transfers an alpha-D-mannosyl residue from GDP-mannose into lipid-linked oligosaccharide, forming an alpha-(1-&gt;2)-D-mannosyl-D-mannose linkage. The chain is Probable mannosyltransferase KTR4 (KTR4) from Saccharomyces cerevisiae (strain ATCC 204508 / S288c) (Baker's yeast).